A 184-amino-acid chain; its full sequence is Protein DESIGUAL 3 (184 aa).

Residues 1-24 form the signal peptide; it reads MESELGFLVSVVIICADITATVLG. The segment covering 34–45 has biased composition (basic residues); that stretch reads APHHHHQQHSRH. A disordered region spans residues 34-53; the sequence is APHHHHQQHSRHSGSGCRRS. The next 3 helical transmembrane spans lie at 62 to 82, 99 to 119, and 140 to 160; these read GVAA…LGGC, ILAV…YSTL, and FFLI…AYYV. Residue asparagine 180 is glycosylated (N-linked (GlcNAc...) asparagine).

This sequence belongs to the DESIGUAL family. Mainly expressed in roots, inflorescences and developing leaves, and, at low levels, in mature leaves.

The protein resides in the endoplasmic reticulum membrane. Functionally, involved, partially redundantly with VCC/DEAL1 and DEAL2, to ensure bilateral symmetry development and early leaf margin patterning, probably via the regulation of auxin and CUC2 distribution. This Arabidopsis thaliana (Mouse-ear cress) protein is Protein DESIGUAL 3.